A 113-amino-acid polypeptide reads, in one-letter code: Class I hydrophobin 1 (113 aa).

An N-terminal signal peptide occupies residues 1–17 (MQFKFLSTVALATLAVA). 4 disulfides stabilise this stretch: C32/C92, C39/C86, C40/C73, and C93/C106.

This sequence belongs to the fungal hydrophobin family. In terms of assembly, self-assembles to form functional amyloid fibrils called rodlets. Self-assembly into fibrillar rodlets occurs spontaneously at hydrophobic:hydrophilic interfaces and the rodlets further associate laterally to form amphipathic monolayers.

The protein localises to the secreted. It localises to the cell wall. Aerial growth, conidiation, and dispersal of filamentous fungi in the environment rely upon a capability of their secreting small amphipathic proteins called hydrophobins (HPBs) with low sequence identity. Class I can self-assemble into an outermost layer of rodlet bundles on aerial cell surfaces, conferring cellular hydrophobicity that supports fungal growth, development and dispersal; whereas Class II form highly ordered films at water-air interfaces through intermolecular interactions but contribute nothing to the rodlet structure. CoH1 is an asexual monokaryon-specific class I hydrophobin that is involved in aerial growth of mycelia. The polypeptide is Class I hydrophobin 1 (Coprinopsis cinerea (Inky cap fungus)).